Here is a 203-residue protein sequence, read N- to C-terminus: Pyrrolidone-carboxylate peptidase 1 (203 aa).

Active-site residues include Glu78, Cys141, and His165.

This sequence belongs to the peptidase C15 family. Homotetramer.

The protein resides in the cytoplasm. It carries out the reaction Release of an N-terminal pyroglutamyl group from a polypeptide, the second amino acid generally not being Pro.. Removes 5-oxoproline from various penultimate amino acid residues except L-proline. This is Pyrrolidone-carboxylate peptidase 1 from Caldanaerobacter subterraneus subsp. tengcongensis (strain DSM 15242 / JCM 11007 / NBRC 100824 / MB4) (Thermoanaerobacter tengcongensis).